A 230-amino-acid chain; its full sequence is uncharacterized protein (230 aa).

Transmembrane regions (helical) follow at residues 34-54, 56-76, 87-107, 111-131, 146-166, 167-187, and 205-225; these read FFAG…MNFQ, VVQY…GLMF, MLFA…GMVI, GLGA…LMSV, MLFI…FLGS, PMFQ…YIAY, and VSLY…IGIF.

This sequence belongs to the BI1 family.

The protein localises to the cell membrane. This is an uncharacterized protein from Helicobacter pylori (strain ATCC 700392 / 26695) (Campylobacter pylori).